Reading from the N-terminus, the 109-residue chain is Thioredoxin 2 (109 aa).

Residues 2–109 (SGKYFEATDQ…IAKKLDEHIG (108 aa)) form the Thioredoxin domain. Cys33 and Cys36 are joined by a disulfide.

Belongs to the thioredoxin family.

Its function is as follows. Participates in various redox reactions through the reversible oxidation of its active center dithiol to a disulfide and catalyzes dithiol-disulfide exchange reactions. This is Thioredoxin 2 (trx2) from Chlorobaculum tepidum (strain ATCC 49652 / DSM 12025 / NBRC 103806 / TLS) (Chlorobium tepidum).